The primary structure comprises 60 residues: Large ribosomal subunit protein bL32 (60 aa).

Positions 1–46 (MAVQQNKKSPSKRGMHRSHNALNTPGTAIEPTTGEVHLRHHISPTG) are disordered. Over residues 9–19 (SPSKRGMHRSH) the composition is skewed to basic residues.

Belongs to the bacterial ribosomal protein bL32 family.

In Leptothrix cholodnii (strain ATCC 51168 / LMG 8142 / SP-6) (Leptothrix discophora (strain SP-6)), this protein is Large ribosomal subunit protein bL32.